The sequence spans 563 residues: Choline transporter (563 aa).

A disordered region spans residues 1–25 (MSIRNDNASGGYMQPDQSSNASMHK). At 1–57 (MSIRNDNASGGYMQPDQSSNASMHKRDLRVEEEIKPLDDMDSKGAVAADGEVHLRKS) the chain is on the extracellular side. Asparagine 7 and asparagine 20 each carry an N-linked (GlcNAc...) asparagine glycan. 2 positions are modified to phosphoserine: serine 22 and serine 42. A helical transmembrane segment spans residues 58 to 78 (FSLWSILGVGFGLTNSWFGIS). The Cytoplasmic portion of the chain corresponds to 79–87 (TSMVAGISS). Residues 88-108 (GGPMMIVYGIIIVALISICIG) form a helical membrane-spanning segment. Over 109 to 182 (TSLGELSSAY…LTHPEFIPKR (74 aa)) the chain is Extracellular. Residues 183–203 (WHIFVCFELLHLFLMFFNCYG) form a helical membrane-spanning segment. At 204 to 205 (KS) the chain is on the cytoplasmic side. A helical membrane pass occupies residues 206 to 226 (LPIISSSSLYISLLSFFTITI). Residues 227–255 (TVLACSHGKFNDAKFVFATFNNETGWKNG) lie on the Extracellular side of the membrane. N-linked (GlcNAc...) asparagine glycosylation is present at asparagine 248. A helical membrane pass occupies residues 256–276 (GIAFIVGLINPAWSFSCLDCA). The Cytoplasmic portion of the chain corresponds to 277-293 (THMAFEVEKPERVIPIA). The helical transmembrane segment at 294–314 (IMGTVAIGFVTSFCYVIAMFF) threads the bilayer. The Extracellular segment spans residues 315–342 (SIQDLDAVLSSTTGAPILDIYNQALGNK). Asparagine 341 carries an N-linked (GlcNAc...) asparagine glycan. Residues 343-363 (SGAIFLGCLILFTSFGCVIAC) form a helical membrane-spanning segment. Residues 364 to 398 (HTWQARLCWSFARDNGLPLSRLWSQVNPHTGVPLN) lie on the Cytoplasmic side of the membrane. The chain crosses the membrane as a helical span at residues 399–417 (AHLMSCAWITLIGLLYLAS). At 418–426 (STAFQSLIT) the chain is on the extracellular side. The helical transmembrane segment at 427–445 (GCIAFLLLSYIIPVICLLA) threads the bilayer. Residues 446–465 (KKRNIAHGPFWLGKFGFFSN) are Cytoplasmic-facing. The chain crosses the membrane as a helical span at residues 466–486 (IVLLGWTVFSVVFFSFPPVLP). Residues 487–491 (VTKDN) lie on the Extracellular side of the membrane. A helical membrane pass occupies residues 492 to 512 (MNYVCVVIVGYTAYSILYWKY). Residues 513 to 563 (KGKKEFHALEESENEQAEYSNNFDTIEDSREFSVAASDVELENEHVPWGKK) are Cytoplasmic-facing.

This sequence belongs to the amino acid-polyamine-organocation (APC) superfamily. Amino acid/choline transporter (ACT) (TC 2.A.3.4) family.

The protein resides in the membrane. It catalyses the reaction choline(out) = choline(in). The enzyme catalyses ethanolamine(in) = ethanolamine(out). In terms of biological role, sole choline transporter in yeast. Also transports ethanolamine. The protein is Choline transporter (HNM1) of Saccharomyces cerevisiae (strain ATCC 204508 / S288c) (Baker's yeast).